A 1393-amino-acid chain; its full sequence is DNA-directed RNA polymerase subunit beta' (1393 aa).

Residues cysteine 72, cysteine 74, cysteine 87, and cysteine 90 each coordinate Zn(2+). Residues aspartate 463, aspartate 465, and aspartate 467 each coordinate Mg(2+). Positions 812, 887, 894, and 897 each coordinate Zn(2+).

Belongs to the RNA polymerase beta' chain family. The RNAP catalytic core consists of 2 alpha, 1 beta, 1 beta' and 1 omega subunit. When a sigma factor is associated with the core the holoenzyme is formed, which can initiate transcription. It depends on Mg(2+) as a cofactor. Zn(2+) serves as cofactor.

It catalyses the reaction RNA(n) + a ribonucleoside 5'-triphosphate = RNA(n+1) + diphosphate. Functionally, DNA-dependent RNA polymerase catalyzes the transcription of DNA into RNA using the four ribonucleoside triphosphates as substrates. The protein is DNA-directed RNA polymerase subunit beta' of Chlamydia pneumoniae (Chlamydophila pneumoniae).